A 75-amino-acid chain; its full sequence is uncharacterized protein (75 aa).

The first 21 residues, 1-21, serve as a signal peptide directing secretion; it reads MRLIVVSIMVTLLSGCGSIIS.

This sequence to E.coli YidQ.

This is an uncharacterized protein from Escherichia coli O157:H7.